A 509-amino-acid chain; its full sequence is Putative thymidine phosphorylase (509 aa).

The protein belongs to the thymidine/pyrimidine-nucleoside phosphorylase family. Type 2 subfamily.

It carries out the reaction thymidine + phosphate = 2-deoxy-alpha-D-ribose 1-phosphate + thymine. The sequence is that of Putative thymidine phosphorylase from Bradyrhizobium sp. (strain ORS 278).